The primary structure comprises 208 residues: Myosin light chain 6B (208 aa).

The tract at residues 1-51 is disordered; it reads MPPKKDVPVKKPAGPSISKPAAKPAAAGAPPAKTKAEPAVPQAPQKTQEPP. The span at 10–40 shows a compositional bias: low complexity; the sequence is KKPAGPSISKPAAKPAAAGAPPAKTKAEPAV. 3 EF-hand domains span residues 64 to 99, 141 to 176, and 176 to 208; these read DQLEEFKEAFELFDRVGDGKILYSQCGDVMRALGQN, GTYEDYLEGFRVFDKEGNGKVMGAELRHVLTTLGEK, and KMTEEEVETVLAGHEDSNGCINYEAFLKHILSV.

Myosin is a hexamer of 2 heavy chains and 4 light chains.

In terms of biological role, regulatory light chain of myosin. Does not bind calcium. This Homo sapiens (Human) protein is Myosin light chain 6B (MYL6B).